The primary structure comprises 572 residues: Moesin (572 aa).

In terms of domain architecture, FERM spans 1-294 (MPRGVAVRVT…GNHELYMRRR (294 aa)). Disordered stretches follow at residues 444–508 (SQER…SYLP) and 523–544 (LQAM…QENI). Residues 454 to 475 (AQEAAAAQHAAQLAAQREAQQL) are compositionally biased toward low complexity. Residues 480–502 (EGEEDEQDHELEVQQDDNDDLDD) show a composition bias toward acidic residues. Over residues 525–544 (AMKDESKGEDRYDKIHQENI) the composition is skewed to basic and acidic residues.

The protein resides in the cell membrane. It is found in the cytoplasm. Its subcellular location is the cytoskeleton. The protein localises to the cell projection. Functionally, probably involved in connections of major cytoskeletal structures to the plasma membrane. The protein is Moesin of Lytechinus variegatus (Green sea urchin).